The chain runs to 396 residues: Cell division protein FtsZ 1 (396 aa).

The segment at Met-1–Met-38 is disordered. Acidic residues predominate over residues Ala-8–Ala-19. GTP-binding positions include Gly-61–Asn-65, Gly-148–Gly-150, Glu-179, Arg-183, and Asp-226. A disordered region spans residues Gln-358–Glu-396.

The protein belongs to the FtsZ family. Homodimer. Polymerizes to form a dynamic ring structure in a strictly GTP-dependent manner. Interacts directly with several other division proteins.

It is found in the cytoplasm. Its function is as follows. Essential cell division protein that forms a contractile ring structure (Z ring) at the future cell division site. The regulation of the ring assembly controls the timing and the location of cell division. One of the functions of the FtsZ ring is to recruit other cell division proteins to the septum to produce a new cell wall between the dividing cells. Binds GTP and shows GTPase activity. This is Cell division protein FtsZ 1 from Halobacterium salinarum (strain ATCC 29341 / DSM 671 / R1).